A 246-amino-acid polypeptide reads, in one-letter code: ATP synthase subunit a (246 aa).

Positions 1–3 (MIY) are cleaved as a propeptide — removed in mature form. A run of 7 helical transmembrane segments spans residues 25 to 45 (VNNY…SVFL), 51 to 71 (LGFN…LNMV), 79 to 99 (GGMY…ANLV), 112 to 132 (LVAI…MGLS), 138 to 158 (FFAL…LVLI), 178 to 198 (VLSG…LMGS), and 203 to 223 (FMGG…EFAI).

It belongs to the ATPase A chain family. As to quaternary structure, F-type ATPases have 2 components, CF(1) - the catalytic core - and CF(0) - the membrane proton channel. CF(1) has five subunits: alpha(3), beta(3), gamma(1), delta(1), epsilon(1). CF(0) has three main subunits: a, b and c.

It localises to the mitochondrion inner membrane. Mitochondrial membrane ATP synthase (F(1)F(0) ATP synthase or Complex V) produces ATP from ADP in the presence of a proton gradient across the membrane which is generated by electron transport complexes of the respiratory chain. F-type ATPases consist of two structural domains, F(1) - containing the extramembraneous catalytic core and F(0) - containing the membrane proton channel, linked together by a central stalk and a peripheral stalk. During catalysis, ATP synthesis in the catalytic domain of F(1) is coupled via a rotary mechanism of the central stalk subunits to proton translocation. Key component of the proton channel; it may play a direct role in the translocation of protons across the membrane. In Debaryomyces hansenii (strain ATCC 36239 / CBS 767 / BCRC 21394 / JCM 1990 / NBRC 0083 / IGC 2968) (Yeast), this protein is ATP synthase subunit a (ATP6).